We begin with the raw amino-acid sequence, 245 residues long: Enolase-phosphatase E1 (245 aa).

This sequence belongs to the HAD-like hydrolase superfamily. MasA/MtnC family. Monomer. Mg(2+) serves as cofactor.

The catalysed reaction is 5-methylsulfanyl-2,3-dioxopentyl phosphate + H2O = 1,2-dihydroxy-5-(methylsulfanyl)pent-1-en-3-one + phosphate. The protein operates within amino-acid biosynthesis; L-methionine biosynthesis via salvage pathway; L-methionine from S-methyl-5-thio-alpha-D-ribose 1-phosphate: step 3/6. It functions in the pathway amino-acid biosynthesis; L-methionine biosynthesis via salvage pathway; L-methionine from S-methyl-5-thio-alpha-D-ribose 1-phosphate: step 4/6. Functionally, bifunctional enzyme that catalyzes the enolization of 2,3-diketo-5-methylthiopentyl-1-phosphate (DK-MTP-1-P) into the intermediate 2-hydroxy-3-keto-5-methylthiopentenyl-1-phosphate (HK-MTPenyl-1-P), which is then dephosphorylated to form the acireductone 1,2-dihydroxy-3-keto-5-methylthiopentene (DHK-MTPene). This is Enolase-phosphatase E1 from Parasynechococcus marenigrum (strain WH8102).